The chain runs to 131 residues: MKHTELRAAVLDALEKHDTGATFFDGRPAVFDEADFPAVAVYLTGAEYTGEELDSDTWQAELHIEVFLPAQVPDSELDAWMESRIYPVMSDIPALSDLITSMVASGYDYRRDDDAGLWSSADLTYVITYEM.

It belongs to the lambda-like tail terminator protein family. As to quaternary structure, homohexamer. May bind to major tail protein V, and /or tape measure protein.

It is found in the virion. It localises to the host cytoplasm. Functionally, plays an essential role in tail assembly by capping the rapidly polymerizing tail once it has reached its requisite length and serving as the interaction surface for the completion protein. The chain is Tail tube terminator protein (U) from Escherichia phage lambda (Bacteriophage lambda).